The primary structure comprises 129 residues: Small ribosomal subunit protein uS8 (129 aa).

The protein belongs to the universal ribosomal protein uS8 family. In terms of assembly, part of the 30S ribosomal subunit.

In terms of biological role, one of the primary rRNA binding proteins, it binds directly to 16S rRNA central domain where it helps coordinate assembly of the platform of the 30S subunit. In Archaeoglobus fulgidus (strain ATCC 49558 / DSM 4304 / JCM 9628 / NBRC 100126 / VC-16), this protein is Small ribosomal subunit protein uS8.